The primary structure comprises 277 residues: MALVKVKPTSPGRRAVVKVVNAGLHKGAPYPHLVEKQNRTAGRNNKGQITTRHIGGGHKQHYRIVDFRRNKDGIAARVERLEYDPNRSANLALLCYSDGERRYVIAPKGIVPGMQLMSGADAPIKNGNALPLRNIPVGSIIHCVEMMPGKGAQLARSAGASVQLLAREGDYAQLRLRSGEIRRVHVNCRATIGEVGNEEHNLRAIGKAGAQRWRGIRPTVRGVAMNPIDHPHGGGEGKTAAGRHPVSPWGTPSKGFRTRVNKRTDGMIVRRRYSNKG.

A disordered region spans residues methionine 225–glycine 277.

The protein belongs to the universal ribosomal protein uL2 family. Part of the 50S ribosomal subunit. Forms a bridge to the 30S subunit in the 70S ribosome.

Functionally, one of the primary rRNA binding proteins. Required for association of the 30S and 50S subunits to form the 70S ribosome, for tRNA binding and peptide bond formation. It has been suggested to have peptidyltransferase activity; this is somewhat controversial. Makes several contacts with the 16S rRNA in the 70S ribosome. In Nitrosospira multiformis (strain ATCC 25196 / NCIMB 11849 / C 71), this protein is Large ribosomal subunit protein uL2.